Reading from the N-terminus, the 28-residue chain is uncharacterized protein (28 aa).

The chain crosses the membrane as a helical span at residues 5–27 (SAFHACNIIFLPLVKCASATIML).

The protein localises to the membrane. This is an uncharacterized protein from Saccharomyces cerevisiae (strain ATCC 204508 / S288c) (Baker's yeast).